A 355-amino-acid chain; its full sequence is Cytoplasmic tRNA 2-thiolation protein 1 (355 aa).

Residues 320-341 form a disordered region; sequence GIGRPRGVNGDHNKETKKPGSV. Residues 328 to 337 show a composition bias toward basic and acidic residues; that stretch reads NGDHNKETKK.

This sequence belongs to the TtcA family. CTU1/NCS6/ATPBD3 subfamily.

The protein localises to the cytoplasm. It functions in the pathway tRNA modification; 5-methoxycarbonylmethyl-2-thiouridine-tRNA biosynthesis. In terms of biological role, plays a central role in 2-thiolation of mcm(5)S(2)U at tRNA wobble positions of tRNA(Lys), tRNA(Glu) and tRNA(Gln). Directly binds tRNAs and probably acts by catalyzing adenylation of tRNAs, an intermediate required for 2-thiolation. It is unclear whether it acts as a sulfurtransferase that transfers sulfur from thiocarboxylated URM1 onto the uridine of tRNAs at wobble position. The chain is Cytoplasmic tRNA 2-thiolation protein 1 from Arabidopsis thaliana (Mouse-ear cress).